We begin with the raw amino-acid sequence, 1052 residues long: RIMS-binding protein 2 (1052 aa).

The disordered stretch occupies residues 115 to 164 (GEYIRPLPQPGDRPEPLSAKPTFLSRSGSARCRSESDMENERNSNTSKQR). Basic and acidic residues predominate over residues 146 to 156 (CRSESDMENER). The region spanning 167-234 (GKVHLCVARY…PSNFVDFVQD (68 aa)) is the SH3 1 domain. Fibronectin type-III domains are found at residues 297 to 390 (VPYP…GKDV), 393 to 475 (APSH…KKEA), and 489 to 590 (PPQD…VPPT). Disordered regions lie at residues 584-615 (ELLVPPTPHPRPAPQSKPLASSGVPETKDEHL), 629-666 (RAPGPVHGHMLEPPVGPGRRSPSPSRILPQPQGTPVST), 697-716 (SAGQYAASDEEDAYDSPDFK), 767-787 (EMQLEDGGRRRPSGTSHNALK), and 805-829 (FPRGSAGPQRSRPVTVPSIDDYGRD). A compositionally biased stretch (pro residues) spans 585 to 598 (LLVPPTPHPRPAPQ). Low complexity predominate over residues 645-654 (PGRRSPSPSR). Ser704 and Ser712 each carry phosphoserine. Phosphoserine is present on residues Ser832 and Ser839. Thr841 is subject to Phosphothreonine. 2 consecutive SH3 domains span residues 848 to 916 (LPAR…EIQA) and 952 to 1019 (VSTR…EVPD). A disordered region spans residues 1029–1052 (PSHYSQDTPMRSKAKRKKSVHFTP). A compositionally biased stretch (basic residues) spans 1040-1052 (SKAKRKKSVHFTP).

It belongs to the RIMBP family. In terms of assembly, interacts with RIMS1, RIMS2, CACNA1D and CACNA1B, and potentially with other Ca(2+) channel alpha-1 isoforms.

It localises to the cell membrane. Its subcellular location is the synapse. Its function is as follows. Plays a role in the synaptic transmission as bifunctional linker that interacts simultaneously with RIMS1, RIMS2, CACNA1D and CACNA1B. This chain is RIMS-binding protein 2 (RIMBP2), found in Homo sapiens (Human).